The chain runs to 412 residues: Motilin receptor (412 aa).

At 1–35 (MGSPWNGSDGPEGAREPPWPALPPCDERRCSPFPL) the chain is on the extracellular side. Asn6 carries an N-linked (GlcNAc...) asparagine glycan. Residues 36–56 (GALVPVTAVCLCLFVVGVSGN) form a helical membrane-spanning segment. The Cytoplasmic segment spans residues 57-74 (VVTVMLIGRYRDMRTTTN). Residues 75 to 94 (LYLGSMAVSDLLILLGLPFD) traverse the membrane as a helical segment. Residues 95-112 (LYRLWRSRPWVFGPLLCR) lie on the Extracellular side of the membrane. Cys111 and Cys235 are disulfide-bonded. A helical transmembrane segment spans residues 113-134 (LSLYVGEGCTYATLLHMTALSV). The Cytoplasmic segment spans residues 135-157 (ERYLAICRPLRARVLVTRRRVRA). Residues 158-178 (LIAVLWAVALLSAGPFLFLVG) traverse the membrane as a helical segment. Topologically, residues 179–246 (VEQDPGISVV…PSPAQLGALR (68 aa)) are extracellular. Residue Asn192 is glycosylated (N-linked (GlcNAc...) asparagine). A helical transmembrane segment spans residues 247–270 (VMLWVTTAYFFLPFLCLSILYGLI). Over 271-298 (GRELWSSRRPLRGPAASGRERGHRQTVR) the chain is Cytoplasmic. A helical membrane pass occupies residues 299 to 320 (VLLVVVLAFIICWLPFHVGRII). The Extracellular portion of the chain corresponds to 321–334 (YINTEDSRMMYFSQ). Residues 335–358 (YFNIVALQLFYLSASINPILYNLI) form a helical membrane-spanning segment. Topologically, residues 359–412 (SKKYRAAAFKLLLARKSRPRGFHRSRDTAGEVAGDTGGDTVGYTETSANVKTMG) are cytoplasmic.

Belongs to the G-protein coupled receptor 1 family. In terms of tissue distribution, expressed only in thyroid, stomach, and bone marrow.

It is found in the cell membrane. Receptor for motilin. This Homo sapiens (Human) protein is Motilin receptor (MLNR).